Reading from the N-terminus, the 1296-residue chain is MPFVNKQFNYKDPVNGVDIAYIKIPNVGQMQPVKAFKIHNKIWVIPERDTFTNPEEGDLNPPPEAKQVPVSYYDSTYLSTDNEKDNYLKGVTKLFERIYSTDLGRMLLTSIVRGIPFWGGSTIDTELKVIDTNCINVIQPDGSYRSEELNLVIIGPSADIIQFECKSFGHEVLNLTRNGYGSTQYIRFSPDFTFGFEESLEVDTNPLLGAGKFATDPAVTLAHELIHAGHRLYGIAINPNRVFKVNTNAYYEMSGLEVSFEELRTFGGHDAKFIDSLQENEFRLYYYNKFKDIASTLNKAKSIVGTTASLQYMKNVFKEKYLLSEDTSGKFSVDKLKFDKLYKMLTEIYTEDNFVKFFKVLNRKTYLNFDKAVFKINIVPKVNYTIYDGFNLRNTNLAANFNGQNTEINNMNFTKLKNFTGLFEFYKLLCVRGIITSKTKSLDKGYNKALNDLCIKVNNWDLFFSPSEDNFTNDLNKGEEITSDTNIEAAEENISLDLIQQYYLTFNFDNEPENISIENLSSDIIGQLELMPNIERFPNGKKYELDKYTMFHYLRAQEFEHGKSRIALTNSVNEALLNPSRVYTFFSSDYVKKVNKATEAAMFLGWVEQLVYDFTDETSEVSTTDKIADITIIIPYIGPALNIGNMLYKDDFVGALIFSGAVILLEFIPEIAIPVLGTFALVSYIANKVLTVQTIDNALSKRNEKWDEVYKYIVTNWLAKVNTQIDLIRKKMKEALENQAEATKAIINYQYNQYTEEEKNNINFNIDDLSSKLNESINKAMININKFLNQCSVSYLMNSMIPYGVKRLEDFDASLKDALLKYIYDNRGTLIGQVDRLKDKVNNTLSTDIPFQLSKYVDNQRLLSTFTEYIKNIINTSILNLRYESNHLIDLSRYASKINIGSKVNFDPIDKNQIQLFNLESSKIEVILKNAIVYNSMYENFSTSFWIRIPKYFNSISLNNEYTIINCMENNSGWKVSLNYGEIIWTLQDTQEIKQRVVFKYSQMINISDYINRWIFVTITNNRLNNSKIYINGRLIDQKPISNLGNIHASNNIMFKLDGCRDTHRYIWIKYFNLFDKELNEKEIKDLYDNQSNSGILKDFWGDYLQYDKPYYMLNLYDPNKYVDVNNVGIRGYMYLKGPRGSVMTTNIYLNSSLYRGTKFIIKKYASGNKDNIVRNNDRVYINVVVKNKEYRLATNASQAGVEKILSALEIPDVGNLSQVVVMKSKNDQGITNKCKMNLQDNNGNDIGFIGFHQFNNIAKLVASNWYNRQIERSSRTLGCSWEFIPVDDGWGERPL.

Position 223 (His-223) interacts with Zn(2+). Glu-224 functions as the Proton acceptor in the catalytic mechanism. Zn(2+) is bound by residues His-227 and Glu-262. Residues Cys-430 and Cys-454 are joined by a disulfide bond. The interval 449 to 870 (ALNDLCIKVN…RLLSTFTEYI (422 aa)) is translocation domain (TD); not required to bind NTNHA. A belt; not required for channel formation region spans residues 492 to 545 (ENISLDLIQQYYLTFNFDNEPENISIENLSSDIIGQLELMPNIERFPNGKKYEL). The next 2 membrane-spanning stretches (helical) occupy residues 627–647 (IADI…GNML) and 656–676 (LIFS…IPVL). Positions 871–1092 (KNIINTSILN…EIKDLYDNQS (222 aa)) are N-terminus of receptor binding domain (N-RBD). The interval 1093–1296 (NSGILKDFWG…VDDGWGERPL (204 aa)) is C-terminus of receptor binding domain (C-RBD). Positions 1117 and 1203 each coordinate a ganglioside GT1b (d18:1(4E)). Cys-1235 and Cys-1280 are disulfide-bonded. The interval 1252–1253 (FH) is interaction with host ganglioside GT1b. The Host ganglioside-binding motif; interacts with GT1b motif lies at 1264 to 1267 (SNWY).

It belongs to the peptidase M27 family. In terms of assembly, heterodimer; disulfide-linked heterodimer of a light chain (LC) and heavy chain (HC). Interacts with glycosylated host synaptic vesicle glycoproteins SV2A, SV2B and SV2C which serve as coreceptors. Glycosylation of 'Asn-559' in SV2C contributes a 12-fold increase in affinity to this interaction. Depolarization of target tissue with high levels of K(+) leads to greater levels of receptor exposure. In vitro addition of gangliosides increases SV2-toxin interaction. Forms a highly interlocked heterodimer with NTNHA at pH 6.0 but not at pH 7.5 called the minimally functional progenitor toxin complex (M-PTC). The PTC is thought to protect toxin in the host acidic gastrointestinal tract, facilitate transcytosis across the intestinal barrier and release at neutral pH as is found in the bloodstream. Zn(2+) serves as cofactor. Post-translationally, in a bacterial culture the precursor chain is initally cleaved on the amino side of Gly-445 and is processed more slowly between Lys-448 and Ala-449 to give the final mature heavy chain sequence. In terms of processing, has slow autocatalytic activity, cleaves 250-Tyr-Tyr-251, 266-Phe-Gly-267, 419-Phe-Thr-420, 423-Phe-Glu-424, 430-Cys-Val-431, 432-Arg-Gly-433, 438-Lys-Thr-439, and probably 429-Leu-Cys-430 over a period of 4 weeks. Catalysis of the '197-Gln-|-Arg-198' bond in SNAP25 is estimated to be 10(5) more efficient than autocatalysis, leaving the physiological importance of autocatalysis in doubt. Ubiquitinated by host HECD2. Deubiquitination by host VCPIP1 prevents degradation by the proteasome.

The protein localises to the secreted. It localises to the cell wall. The protein resides in the host synapse. Its subcellular location is the host presynaptic cell membrane. It is found in the host cytoplasm. The protein localises to the host cytosol. It localises to the host cytoplasmic vesicle. The protein resides in the host secretory vesicle. Its subcellular location is the host synaptic vesicle membrane. The enzyme catalyses Limited hydrolysis of proteins of the neuroexocytosis apparatus, synaptobrevins, SNAP25 or syntaxin. No detected action on small molecule substrates.. With respect to regulation, toxin internalization is inhibited by azide or dinitrophenol or at 4 degrees Celsius. Dynamin (DNM) inhibitors abolish toxin uptake. Botulinum toxin causes flaccid paralysis by inhibiting neurotransmitter (acetylcholine) release from the presynaptic membranes of nerve terminals of the eukaryotic host skeletal and autonomic nervous system, with frequent heart or respiratory failure. Precursor of botulinum neurotoxin A which has 2 coreceptors; complex polysialylated gangliosides found on neural tissue and specific membrane-anchored proteins of synaptic vesicles. Receptor proteins are exposed on host presynaptic cell membrane during neurotransmitter release, when the toxin heavy chain (HC) binds to them. Upon synaptic vesicle recycling the toxin is taken up via the endocytic pathway. When the pH of the toxin-containing endosome drops a structural rearrangement occurs so that the N-terminus of the HC forms pores that allows the light chain (LC) to translocate into the cytosol. Once in the cytosol the disulfide bond linking the 2 subunits is reduced and LC cleaves its target protein on synaptic vesicles, preventing their fusion with the cytoplasmic membrane and thus neurotransmitter release. Toxin activity requires polysialylated gangliosides; GT1b supports activity better than GD1a. Binds to host peripheral neuronal presynaptic membranes via the synaptic vesicle glycoproteins SV2A, SV2B and SV2C. It binds directly to the largest lumenal (intravesicular) loop of SV2A, SV2B and SV2C that is transiently exposed outside of cells during exocytosis; gangliosides enhance binding. Recognizes an N-linked glycan on SV2 proteins. May also use FGFR3 as a receptor. Toxin uptake into neural cells requires stimulation (incubation with K(+) to stimulate receptor exposure) to be internalized by receptor-mediated endocytosis. Subsequently the toxin colocalizes with its receptor in host cells. Toxin uptake can be blocked by the appropriate SV2 protein fragments in cell culture. Its function is as follows. Has proteolytic activity. After translocation into the eukaryotic host cytosol LC hydrolyzes the '197-Gln-|-Arg-198' bond in SNAP25, blocking neurotransmitter release. Recognizes the '146-Met--Gly-155' region of SNAP25, which confers substrate specificity. Hydrolyzes the '202-Thr-|-Arg-203' bond of mouse SNAP23, but not in human which has a different sequence. Reduction of the interchain disulfide bond occurs in the host cytosol and probably prevents retrotranslocation into the synaptic vesicle. Has slow (occurs over 4 weeks) autocatalytic cleavage, however it is not clear if this is physiologically relevant. In terms of biological role, responsible for host epithelial cell transcytosis, host nerve cell targeting and translocation of botulinum neurotoxin A light chain (LC) into host cytosol. Composed of 3 subdomains; the translocation domain (TD), and N-terminus and C-terminus of the receptor-binding domain (RBD). The RBD is responsible for binding to host epithelial cells and transcytosis across them; this uses different receptors than those on nerve cells. RBD is also responsible for adherence of toxin to host nerve cell surface; HC alone prevents uptake of whole toxin by neural cells, and delays paralysis onset by 75%. Isolated RBD also delays paralysis onset. The N-terminus of the RBD binds to phosphatidylinositol, which might play a role in membrane-binding. Binds to host protein receptor synaptic vesicle glycoproteins SV2A, SV2B and SV2C via lumenal loop 4. Binding can be inhibited by protein fragments from either the HC or SV2C. Isolated HC significantly decreases uptake and toxicity of whole BoNT/A, but also interferes with uptake of BoNT/E and to a lesser extent BoNT/F. The RBD recognizes the N-linked glycan on 'Asn-559' of SV2A, SV2B and SV2C; hydrogen-bonding occurs via 10 well-defined water molecules and stacking of hydrophobic residues. Binds one host GT1b ganglioside, which serves as a coreceptor. Modeling shows the HC can bind both coreceptors (a ganglioside and SV2 protein) simultaneously at different sites. Crystals of the RBD with a GT1b analog can be grown at pH 5.5, indicating the toxin-ganglioside complex could be stable within the endosome. Isolated RBD binds NTNHA (a bacterial protein that protects toxin) with high affinity at pH 6.0 but not at pH 7.5. The N-terminal belt (residues 449-545) wraps around the perimeter of the LC, probably protecting Zn(2+) in the active site; it is not required for channel formation by the TD domain but may serve to prevent premature LC dissociation from the translocation channel and to protect toxin prior to translocation. The isolated TD forms transmembrane channels of about 15 Angstroms in the absence of a pH gradient; LC translocation requires a pH and redox gradient (pH 5.0/oxidizing in the cis compartment, pH 7.0/reducing in the trans compartment), LC does not unfold unless the cis pH is 6.0 or less. Pores are presumably made by 1-2 toxin molecules. While interaction with the RBD modulates the pH threshold for membrane insertion, the RBD is not essential for toxin degradation of SNAP25 in neural cells. This Clostridium botulinum protein is Botulinum neurotoxin type A.